Reading from the N-terminus, the 571-residue chain is Plastidial pyruvate kinase 3, chloroplastic (571 aa).

Residues 1-55 (MAAYGQISSGMTVDPQVLSSSRNIGVSLSPLRRTLIGAGVRSTSISLRQCSLSVR) constitute a chloroplast transit peptide. Arginine 129 lines the substrate pocket. Residues asparagine 131, serine 133, aspartate 164, and threonine 165 each coordinate K(+). 131–134 (NMSH) provides a ligand contact to ATP. Residue arginine 171 coordinates ATP. Lysine 314 contacts substrate. Position 316 (glutamate 316) interacts with Mg(2+). Substrate contacts are provided by glycine 339, aspartate 340, and threonine 372. A Mg(2+)-binding site is contributed by aspartate 340.

The protein belongs to the pyruvate kinase family. Oligomer of alpha and beta subunits. It depends on Mg(2+) as a cofactor. The cofactor is K(+). Expressed at low levels in roots, leaves, inflorescences, siliques, pollen, seeds and flowers.

Its subcellular location is the plastid. The protein resides in the chloroplast stroma. It catalyses the reaction pyruvate + ATP = phosphoenolpyruvate + ADP + H(+). It functions in the pathway carbohydrate degradation; glycolysis; pyruvate from D-glyceraldehyde 3-phosphate: step 5/5. Its function is as follows. Required for plastidial pyruvate kinase activity. In Arabidopsis thaliana (Mouse-ear cress), this protein is Plastidial pyruvate kinase 3, chloroplastic (PKP3).